We begin with the raw amino-acid sequence, 202 residues long: B-cell CLL/lymphoma 7 protein family member B (202 aa).

The interval 53–202 (DSKEKEKSKS…PTVPQTASES (150 aa)) is disordered. Positions 90 to 99 (ENSNQSSVSD) are enriched in polar residues. Over residues 107–123 (SSTNSSPSPQQSESLSP) the composition is skewed to low complexity. Serine 114, serine 118, serine 120, serine 122, serine 127, serine 148, and serine 152 each carry phosphoserine.

It belongs to the BCL7 family. In terms of tissue distribution, ubiquitous.

Its function is as follows. Positive regulator of apoptosis. Plays a role in the Wnt signaling pathway, negatively regulating the expression of Wnt signaling components CTNNB1 and HMGA1. Involved in cell cycle progression, maintenance of the nuclear structure and stem cell differentiation. May play a role in lung tumor development or progression. The polypeptide is B-cell CLL/lymphoma 7 protein family member B (BCL7B) (Homo sapiens (Human)).